Reading from the N-terminus, the 533-residue chain is Subtilisin-like serine protease pepC (533 aa).

The first 16 residues, 1-16 (MKGILGLSLLPLLTAA), serve as a signal peptide directing secretion. In terms of domain architecture, Inhibitor I9 spans 43-136 (SYIVVFKKHV…IERDSEVHTM (94 aa)). Residues 145-450 (PWGLARISHR…VGIYKRNELT (306 aa)) form the Peptidase S8 domain. Catalysis depends on charge relay system residues Asp-181 and His-213. A glycan (N-linked (GlcNAc...) asparagine) is linked at Asn-283. Cys-320 and Cys-351 form a disulfide bridge. Ser-379 functions as the Charge relay system in the catalytic mechanism. N-linked (GlcNAc...) asparagine glycosylation occurs at Asn-435. Over residues 496–513 (KSCSPRSLVPSTARSRMP) the composition is skewed to polar residues. The interval 496–519 (KSCSPRSLVPSTARSRMPSSHRSE) is disordered.

The protein belongs to the peptidase S8 family.

The polypeptide is Subtilisin-like serine protease pepC (pepC) (Aspergillus niger).